Here is a 485-residue protein sequence, read N- to C-terminus: Cysteine--tRNA ligase (485 aa).

Zn(2+) is bound at residue Cys27. The short motif at 29 to 39 (ITAYDLCHIGH) is the 'HIGH' region element. Zn(2+)-binding residues include Cys208, His233, and Glu237. A 'KMSKS' region motif is present at residues 265 to 269 (KMSKS). Lys268 contributes to the ATP binding site.

This sequence belongs to the class-I aminoacyl-tRNA synthetase family. Monomer. It depends on Zn(2+) as a cofactor.

Its subcellular location is the cytoplasm. The catalysed reaction is tRNA(Cys) + L-cysteine + ATP = L-cysteinyl-tRNA(Cys) + AMP + diphosphate. This chain is Cysteine--tRNA ligase, found in Maridesulfovibrio salexigens (strain ATCC 14822 / DSM 2638 / NCIMB 8403 / VKM B-1763) (Desulfovibrio salexigens).